Consider the following 860-residue polypeptide: DNA mismatch repair protein MutS (860 aa).

625-632 lines the ATP pocket; it reads GPNMGGKS.

The protein belongs to the DNA mismatch repair MutS family.

In terms of biological role, this protein is involved in the repair of mismatches in DNA. It is possible that it carries out the mismatch recognition step. This protein has a weak ATPase activity. This Aeromonas hydrophila subsp. hydrophila (strain ATCC 7966 / DSM 30187 / BCRC 13018 / CCUG 14551 / JCM 1027 / KCTC 2358 / NCIMB 9240 / NCTC 8049) protein is DNA mismatch repair protein MutS.